Here is a 151-residue protein sequence, read N- to C-terminus: D-aminoacyl-tRNA deacylase (151 aa).

A Gly-cisPro motif, important for rejection of L-amino acids motif is present at residues 137–138; the sequence is GP.

Belongs to the DTD family. Homodimer.

The protein localises to the cytoplasm. It catalyses the reaction glycyl-tRNA(Ala) + H2O = tRNA(Ala) + glycine + H(+). The enzyme catalyses a D-aminoacyl-tRNA + H2O = a tRNA + a D-alpha-amino acid + H(+). An aminoacyl-tRNA editing enzyme that deacylates mischarged D-aminoacyl-tRNAs. Also deacylates mischarged glycyl-tRNA(Ala), protecting cells against glycine mischarging by AlaRS. Acts via tRNA-based rather than protein-based catalysis; rejects L-amino acids rather than detecting D-amino acids in the active site. By recycling D-aminoacyl-tRNA to D-amino acids and free tRNA molecules, this enzyme counteracts the toxicity associated with the formation of D-aminoacyl-tRNA entities in vivo and helps enforce protein L-homochirality. This is D-aminoacyl-tRNA deacylase from Geobacter metallireducens (strain ATCC 53774 / DSM 7210 / GS-15).